The following is an 86-amino-acid chain: Putative membrane protein insertion efficiency factor (86 aa).

It belongs to the UPF0161 family.

It localises to the cell membrane. Could be involved in insertion of integral membrane proteins into the membrane. This Streptococcus pyogenes serotype M1 protein is Putative membrane protein insertion efficiency factor.